Consider the following 264-residue polypeptide: Thymidylate synthase (264 aa).

Residue Arg21 coordinates dUMP. His51 contacts (6R)-5,10-methylene-5,6,7,8-tetrahydrofolate. Position 126–127 (126–127) interacts with dUMP; it reads RR. Residue Cys146 is the Nucleophile of the active site. Residues 166–169, Asn177, and 207–209 each bind dUMP; these read RSAD and HLY. Residue Asp169 coordinates (6R)-5,10-methylene-5,6,7,8-tetrahydrofolate. Ala263 contacts (6R)-5,10-methylene-5,6,7,8-tetrahydrofolate.

Belongs to the thymidylate synthase family. Bacterial-type ThyA subfamily. As to quaternary structure, homodimer.

The protein localises to the cytoplasm. The enzyme catalyses dUMP + (6R)-5,10-methylene-5,6,7,8-tetrahydrofolate = 7,8-dihydrofolate + dTMP. It participates in pyrimidine metabolism; dTTP biosynthesis. Catalyzes the reductive methylation of 2'-deoxyuridine-5'-monophosphate (dUMP) to 2'-deoxythymidine-5'-monophosphate (dTMP) while utilizing 5,10-methylenetetrahydrofolate (mTHF) as the methyl donor and reductant in the reaction, yielding dihydrofolate (DHF) as a by-product. This enzymatic reaction provides an intracellular de novo source of dTMP, an essential precursor for DNA biosynthesis. The sequence is that of Thymidylate synthase from Hahella chejuensis (strain KCTC 2396).